A 183-amino-acid chain; its full sequence is Oligoribonuclease (183 aa).

One can recognise an Exonuclease domain in the interval 8-171; that stretch reads LIWLDLEMTG…QDIRDSIEEL (164 aa). Residue Y129 is part of the active site.

It belongs to the oligoribonuclease family.

Its subcellular location is the cytoplasm. 3'-to-5' exoribonuclease specific for small oligoribonucleotides. This chain is Oligoribonuclease, found in Coxiella burnetii (strain RSA 493 / Nine Mile phase I).